Reading from the N-terminus, the 445-residue chain is Phosphoglucosamine mutase (445 aa).

The Phosphoserine intermediate role is filled by S102. Positions 102, 240, 242, and 244 each coordinate Mg(2+). A Phosphoserine modification is found at S102.

Belongs to the phosphohexose mutase family. It depends on Mg(2+) as a cofactor. In terms of processing, activated by phosphorylation.

It carries out the reaction alpha-D-glucosamine 1-phosphate = D-glucosamine 6-phosphate. Catalyzes the conversion of glucosamine-6-phosphate to glucosamine-1-phosphate. This chain is Phosphoglucosamine mutase, found in Mycobacterium ulcerans (strain Agy99).